Reading from the N-terminus, the 380-residue chain is Probable polyglutamine synthesis accessory protein MT0602 (380 aa).

This sequence belongs to the CapA family.

In terms of biological role, could be involved in the biosynthesis, transport or localization of poly-alpha-L-glutamine (PLG), a cell wall component. Contributes to stress tolerance and virulence. This chain is Probable polyglutamine synthesis accessory protein MT0602, found in Mycobacterium tuberculosis (strain CDC 1551 / Oshkosh).